Reading from the N-terminus, the 527-residue chain is Proline--tRNA ligase (527 aa).

The protein belongs to the class-II aminoacyl-tRNA synthetase family. ProS type 3 subfamily. In terms of assembly, homodimer.

The protein localises to the cytoplasm. The catalysed reaction is tRNA(Pro) + L-proline + ATP = L-prolyl-tRNA(Pro) + AMP + diphosphate. Its function is as follows. Catalyzes the attachment of proline to tRNA(Pro) in a two-step reaction: proline is first activated by ATP to form Pro-AMP and then transferred to the acceptor end of tRNA(Pro). The polypeptide is Proline--tRNA ligase (Sphingopyxis alaskensis (strain DSM 13593 / LMG 18877 / RB2256) (Sphingomonas alaskensis)).